Consider the following 271-residue polypeptide: Ribosomal RNA small subunit methyltransferase A (271 aa).

Residues Asn-18, Leu-20, Gly-45, Glu-66, Asp-91, and Asn-112 each coordinate S-adenosyl-L-methionine.

The protein belongs to the class I-like SAM-binding methyltransferase superfamily. rRNA adenine N(6)-methyltransferase family. RsmA subfamily.

It is found in the cytoplasm. The catalysed reaction is adenosine(1518)/adenosine(1519) in 16S rRNA + 4 S-adenosyl-L-methionine = N(6)-dimethyladenosine(1518)/N(6)-dimethyladenosine(1519) in 16S rRNA + 4 S-adenosyl-L-homocysteine + 4 H(+). Its function is as follows. Specifically dimethylates two adjacent adenosines (A1518 and A1519) in the loop of a conserved hairpin near the 3'-end of 16S rRNA in the 30S particle. May play a critical role in biogenesis of 30S subunits. This is Ribosomal RNA small subunit methyltransferase A from Vibrio cholerae serotype O1 (strain ATCC 39315 / El Tor Inaba N16961).